Consider the following 131-residue polypeptide: Amicyanin (131 aa).

The N-terminal stretch at 1-26 (MISATKIRSCLAACVLAAFGATGALA) is a signal peptide. In terms of domain architecture, Plastocyanin-like spans 27–131 (DKATIPSESP…PFMRGKVVVE (105 aa)). Cu cation-binding residues include histidine 79, cysteine 118, histidine 121, and methionine 124.

Requires Cu cation as cofactor.

It is found in the periplasm. The protein operates within one-carbon metabolism; methylamine degradation. Functionally, primary acceptor of electrons from methylamine dehydrogenase. Passes those electrons on either a soluble cytochrome c or to pseudoazurin. This is Amicyanin (mauC) from Paracoccus denitrificans.